Consider the following 574-residue polypeptide: Proline--tRNA ligase (574 aa).

It belongs to the class-II aminoacyl-tRNA synthetase family. ProS type 1 subfamily. In terms of assembly, homodimer.

It localises to the cytoplasm. It carries out the reaction tRNA(Pro) + L-proline + ATP = L-prolyl-tRNA(Pro) + AMP + diphosphate. Its function is as follows. Catalyzes the attachment of proline to tRNA(Pro) in a two-step reaction: proline is first activated by ATP to form Pro-AMP and then transferred to the acceptor end of tRNA(Pro). As ProRS can inadvertently accommodate and process non-cognate amino acids such as alanine and cysteine, to avoid such errors it has two additional distinct editing activities against alanine. One activity is designated as 'pretransfer' editing and involves the tRNA(Pro)-independent hydrolysis of activated Ala-AMP. The other activity is designated 'posttransfer' editing and involves deacylation of mischarged Ala-tRNA(Pro). The misacylated Cys-tRNA(Pro) is not edited by ProRS. This chain is Proline--tRNA ligase, found in Marinomonas sp. (strain MWYL1).